Here is a 465-residue protein sequence, read N- to C-terminus: Adenosylhomocysteinase (465 aa).

Residues Thr56, Asp131, and Glu191 each contribute to the substrate site. Thr192–Thr194 serves as a coordination point for NAD(+). 2 residues coordinate substrate: Lys221 and Asp225. Residues Asn226, Gly255–Gly260, Glu278, Asn313, Ile334–His336, and Asn379 contribute to the NAD(+) site.

It belongs to the adenosylhomocysteinase family. NAD(+) serves as cofactor.

Its subcellular location is the cytoplasm. The enzyme catalyses S-adenosyl-L-homocysteine + H2O = L-homocysteine + adenosine. Its pathway is amino-acid biosynthesis; L-homocysteine biosynthesis; L-homocysteine from S-adenosyl-L-homocysteine: step 1/1. Its function is as follows. May play a key role in the regulation of the intracellular concentration of adenosylhomocysteine. The polypeptide is Adenosylhomocysteinase (Bartonella tribocorum (strain CIP 105476 / IBS 506)).